The following is a 296-amino-acid chain: Glycine N-acyltransferase (296 aa).

N6-acetyllysine; alternate is present on residues Lys-16, Lys-127, and Lys-141. 3 positions are modified to N6-succinyllysine; alternate: Lys-16, Lys-127, and Lys-141. Lys-159 is modified (N6-acetyllysine). At Lys-169 the chain carries N6-succinyllysine. Lys-183 and Lys-256 each carry N6-acetyllysine; alternate. Lys-183 and Lys-256 each carry N6-succinyllysine; alternate.

This sequence belongs to the glycine N-acyltransferase family. As to expression, predominantly expressed in liver (at protein level) and kidney. Down-regulated in hepatocellular carcinoma and other liver cancers.

It localises to the mitochondrion. It catalyses the reaction an acyl-CoA + glycine = an N-acylglycine + CoA + H(+). It carries out the reaction benzoyl-CoA + glycine = N-benzoylglycine + CoA + H(+). In terms of biological role, mitochondrial acyltransferase which transfers an acyl group to the N-terminus of glycine and glutamine, although much less efficiently. Can conjugate numerous substrates to form a variety of N-acylglycines, with a preference for benzoyl-CoA over phenylacetyl-CoA as acyl donors. Thereby detoxify xenobiotics, such as benzoic acid or salicylic acid, and endogenous organic acids, such as isovaleric acid. The sequence is that of Glycine N-acyltransferase (GLYAT) from Homo sapiens (Human).